Consider the following 182-residue polypeptide: MPLFLVLKATLSENVTKVSIENTNESRAEFAFDLQCTSCRELHDSKVIINTFEEYAMPASKGTASFLMKCKFCSKELSVNLCAFEDEYLTDQSDDKWAKIKDVRKKHGLSKVKEDSFIPLSLDCRGCELIKFYPDTITFEVSLSSGKVMSCQLEDNEWYDYDDNLGEEVTMTDFSSSIIKGK.

Residues Cys-36, Cys-39, Cys-70, and Cys-73 each contribute to the Zn(2+) site.

It belongs to the UPF0587 family.

The chain is UPF0587 protein YCR090C from Saccharomyces cerevisiae (strain ATCC 204508 / S288c) (Baker's yeast).